The sequence spans 213 residues: Dephospho-CoA kinase (213 aa).

A DPCK domain is found at 3-202 (RIGLTGGIGS…QSYLALADKH (200 aa)). An ATP-binding site is contributed by 11–16 (GSGKTR).

It belongs to the CoaE family.

The protein localises to the cytoplasm. It carries out the reaction 3'-dephospho-CoA + ATP = ADP + CoA + H(+). Its pathway is cofactor biosynthesis; coenzyme A biosynthesis; CoA from (R)-pantothenate: step 5/5. In terms of biological role, catalyzes the phosphorylation of the 3'-hydroxyl group of dephosphocoenzyme A to form coenzyme A. The protein is Dephospho-CoA kinase of Bordetella avium (strain 197N).